The sequence spans 536 residues: Velvet complex subunit B (536 aa).

Residues 1–26 (MIQRTTDPAAGSSTSGPPTNSLSWGS) are compositionally biased toward polar residues. 4 disordered regions span residues 1–27 (MIQRTTDPAAGSSTSGPPTNSLSWGSR), 106–143 (PNAAQDRGPPMPAKPRRPTNPPPPSNTHGSPPAPAIPF), 157–409 (SAPA…RTLV), and 508–536 (KLPLRNRHGSGSKRRRRGAGGGSDDEESD). One can recognise a Velvet domain in the interval 25 to 512 (GSRHNGKLYT…NQQNMKLPLR (488 aa)). Positions 114–143 (PPMPAKPRRPTNPPPPSNTHGSPPAPAIPF) are enriched in pro residues. Composition is skewed to low complexity over residues 158–170 (APASDRSPSSASA) and 190–265 (PYGP…YPPY). Polar residues predominate over residues 280-305 (TSNFDHSQPVTSSVDQETNSPVVTTT). Residues 306-315 (ARDDDQREGE) are compositionally biased toward basic and acidic residues. Residues 328–342 (PSNSGAPSTSPTAST) are compositionally biased toward low complexity. Positions 356–399 (EEREGPDGGPDLREPIEPGSTKAREEEDARTGTEKGDPKDKSDA) are enriched in basic and acidic residues. The span at 400-409 (QRATYTRTLV) shows a compositional bias: polar residues. A compositionally biased stretch (basic residues) spans 511-525 (LRNRHGSGSKRRRRG).

Belongs to the velvet family. VelB subfamily. As to quaternary structure, component of the heterotrimeric velvet complex composed of laeA, veA and velB; VeA acting as a bridging protein between laeA and velB. Forms a heterodimeric complex with vosA; the formation of the velB-vosA complex is light-dependent.

It localises to the nucleus. The protein localises to the cytoplasm. Functionally, component of the velvet transcription factor complex that controls sexual/asexual developmental ratio in response to light, promoting sexual development in the darkness while stimulating asexual sporulation under illumination. The velvet complex acts as a global regulator for secondary metabolite gene expression. Component of the velB-VosA heterodimeric complex that plays a dual role in activating genes associated with spore maturation and repressing certain development-associated genes. The velB-VosA complex binds DNA through the DNA-binding domain of vosA that recognizes an 11-nucleotide consensus sequence 5'-CTGGCCGCGGC-3' consisting of two motifs in the promoters of key developmental regulatory genes. The chain is Velvet complex subunit B from Schizophyllum commune (strain H4-8 / FGSC 9210) (Split gill fungus).